The chain runs to 304 residues: Aspartate carbamoyltransferase catalytic subunit (304 aa).

Carbamoyl phosphate contacts are provided by R49 and T50. K77 contacts L-aspartate. The carbamoyl phosphate site is built by R99, H127, and Q130. R160 and R211 together coordinate L-aspartate. Residues A252 and P253 each coordinate carbamoyl phosphate.

The protein belongs to the aspartate/ornithine carbamoyltransferase superfamily. ATCase family. As to quaternary structure, heterododecamer (2C3:3R2) of six catalytic PyrB chains organized as two trimers (C3), and six regulatory PyrI chains organized as three dimers (R2).

It carries out the reaction carbamoyl phosphate + L-aspartate = N-carbamoyl-L-aspartate + phosphate + H(+). Its pathway is pyrimidine metabolism; UMP biosynthesis via de novo pathway; (S)-dihydroorotate from bicarbonate: step 2/3. Its function is as follows. Catalyzes the condensation of carbamoyl phosphate and aspartate to form carbamoyl aspartate and inorganic phosphate, the committed step in the de novo pyrimidine nucleotide biosynthesis pathway. The polypeptide is Aspartate carbamoyltransferase catalytic subunit (Bacillus cereus (strain ATCC 10987 / NRS 248)).